A 74-amino-acid polypeptide reads, in one-letter code: Brevinin-2Ef (74 aa).

A signal peptide spans 1-22; that stretch reads MFTMKKSLLLIFFLGTISLSLC. The propeptide occupies 23 to 41; that stretch reads QEERNADDDDGEMTEEEKR. A disulfide bond links Cys68 and Cys74.

It belongs to the frog skin active peptide (FSAP) family. Brevinin subfamily. Expressed by the skin glands.

Its subcellular location is the secreted. Shows antibacterial activity against representative Gram-negative and Gram-positive bacterial species, and hemolytic activity. In Pelophylax lessonae (Pool frog), this protein is Brevinin-2Ef.